Here is a 951-residue protein sequence, read N- to C-terminus: Pentatricopeptide repeat-containing protein At4g19220, mitochondrial (951 aa).

The transit peptide at 1–63 directs the protein to the mitochondrion; the sequence is MLLVMVRSST…RHFTSSVLSP (63 aa). PPR repeat units follow at residues 121–151, 152–186, 187–221, 222–252, 253–287, 288–322, 325–355, 356–386, 392–426, 428–458, 459–489, 496–530, 531–561, 563–597, 599–629, 634–668, 669–695, 697–731, 732–762, 763–793, 799–829, and 835–865; these read DLAT…LKEK, DVIV…GNEF, DSTT…GLVG, DSSL…MEHR, DIVS…GQEA, DTVT…GYSP, HVSV…LVCR, DVIS…MQSV, DIAT…EMQS, ALEV…TTHR, DLVS…VVSE, SLST…GFGD, NMLS…MSET, DLTS…GKIR, DLIT…AIKS, DTQL…NLCS, WNCV…LKLE, NEIT…GFQA, NPFV…SGVN, SISA…LSSN, NKSS…MEEK, and VTEH…IGEP. The interval 870–945 is type E motif; the sequence is VWGALLSACN…LPGYSVIDVR (76 aa).

Belongs to the PPR family. PCMP-E subfamily.

It localises to the mitochondrion. This chain is Pentatricopeptide repeat-containing protein At4g19220, mitochondrial (PCMP-E2), found in Arabidopsis thaliana (Mouse-ear cress).